Consider the following 257-residue polypeptide: Pimeloyl-[acyl-carrier protein] methyl ester esterase (257 aa).

Positions 16–240 (LVLIHGWGMN…EQASHAPFIS (225 aa)) constitute an AB hydrolase-1 domain. Substrate-binding positions include Trp22, 82-83 (SL), and 143-147 (FMALQ). Catalysis depends on Ser82, which acts as the Nucleophile. Catalysis depends on residues Asp207 and His235. His235 lines the substrate pocket.

It belongs to the AB hydrolase superfamily. Carboxylesterase BioH family. Monomer.

It localises to the cytoplasm. The enzyme catalyses 6-carboxyhexanoyl-[ACP] methyl ester + H2O = 6-carboxyhexanoyl-[ACP] + methanol + H(+). It participates in cofactor biosynthesis; biotin biosynthesis. In terms of biological role, the physiological role of BioH is to remove the methyl group introduced by BioC when the pimeloyl moiety is complete. It allows to synthesize pimeloyl-ACP via the fatty acid synthetic pathway through the hydrolysis of the ester bonds of pimeloyl-ACP esters. The chain is Pimeloyl-[acyl-carrier protein] methyl ester esterase from Aliivibrio fischeri (strain ATCC 700601 / ES114) (Vibrio fischeri).